We begin with the raw amino-acid sequence, 448 residues long: B-cell lymphoma 3 protein homolog (448 aa).

The interval Met1–Ala54 is disordered. Residue Ser39 is modified to Phosphoserine. ANK repeat units lie at residues Asp129–Asp161, Leu166–Ala195, His199–Val228, Glu236–Ala265, Ser270–Ala299, Ser303–Leu332, and Lys333–Ser362. Positions Lys356–Ser448 are disordered. Residues Ala361 to Asn376 show a composition bias toward polar residues. Ser369 carries the post-translational modification Phosphoserine. The segment covering Ser377–Ser398 has biased composition (low complexity). Residues Ser396 and Ser400 each carry the phosphoserine; by GSK3 modification. Residues Thr411 to Pro423 show a composition bias toward polar residues. The segment covering Phe425–Gly436 has biased composition (low complexity). Over residues Arg437–Ser448 the composition is skewed to pro residues.

In terms of assembly, component of a complex consisting of the NF-kappa-B p52-p52 homodimer and BCL3. Component of a complex consisting of the NF-kappa-B p50-p50 homodimer and BCL3. Interacts with N4BP2, COPS5 and PIR. Interacts with CYLD. Post-translationally, polyubiquitinated. Ubiquitination via 'Lys-63'-linked ubiquitin chains is required for nuclear accumulation. Deubiquitinated by CYLD, which acts on 'Lys-63'-linked ubiquitin chains. Deubiquitination by CYLD prevents nuclear accumulation. In terms of processing, activated by phosphorylation.

The protein resides in the nucleus. Its subcellular location is the cytoplasm. The protein localises to the perinuclear region. Its function is as follows. Contributes to the regulation of transcriptional activation of NF-kappa-B target genes. In the cytoplasm, inhibits the nuclear translocation of the NF-kappa-B p50 subunit. In the nucleus, acts as a transcriptional activator that promotes transcription of NF-kappa-B target genes. Contributes to the regulation of cell proliferation. In Mus musculus (Mouse), this protein is B-cell lymphoma 3 protein homolog (Bcl3).